Reading from the N-terminus, the 357-residue chain is Protein Wnt-5b (357 aa).

Residues 1-18 form the signal peptide; that stretch reads MPGIRLLLAAALLCCPPP. Cysteines 81 and 92 form a disulfide. 2 N-linked (GlcNAc...) asparagine glycosylation sites follow: Asn91 and Asn97. 10 disulfides stabilise this stretch: Cys131–Cys139, Cys141–Cys159, Cys215–Cys229, Cys217–Cys224, Cys286–Cys317, Cys302–Cys312, Cys316–Cys356, Cys332–Cys347, Cys334–Cys344, and Cys339–Cys340. The O-palmitoleoyl serine; by PORCN moiety is linked to residue Ser221. Asn289 and Asn303 each carry an N-linked (GlcNAc...) asparagine glycan.

This sequence belongs to the Wnt family. In terms of processing, palmitoleoylation is required for efficient binding to frizzled receptors. Depalmitoleoylation leads to Wnt signaling pathway inhibition. As to expression, predominantly in neuroectodermal tissues.

It localises to the secreted. The protein resides in the extracellular space. Its subcellular location is the extracellular matrix. In terms of biological role, ligand for members of the frizzled family of seven transmembrane receptors. Probable developmental protein. May be a signaling molecule which affects the development of discrete regions of tissues. Is likely to signal over only few cell diameters. This Ambystoma mexicanum (Axolotl) protein is Protein Wnt-5b (WNT-5B).